We begin with the raw amino-acid sequence, 459 residues long: Bifunctional protein GlmU (459 aa).

Residues 1-230 (MSNRFAVILA…FDETLGVNDR (230 aa)) are pyrophosphorylase. Residues 9–12 (LAAG), Lys23, Gln73, and 78–79 (GT) each bind UDP-N-acetyl-alpha-D-glucosamine. Residue Asp103 coordinates Mg(2+). Residues Gly140, Glu155, Asn170, and Asn228 each contribute to the UDP-N-acetyl-alpha-D-glucosamine site. Position 228 (Asn228) interacts with Mg(2+). The linker stretch occupies residues 231–251 (VALSQAEIIMKNRINRKNMVN). Residues 252-459 (GVTIIDPSNT…VDQLLNKKKS (208 aa)) are N-acetyltransferase. Arg333 and Lys351 together coordinate UDP-N-acetyl-alpha-D-glucosamine. His363 (proton acceptor) is an active-site residue. UDP-N-acetyl-alpha-D-glucosamine contacts are provided by Tyr366 and Asn377. Acetyl-CoA is bound by residues 386–387 (NY), Ala423, and Arg440.

In the N-terminal section; belongs to the N-acetylglucosamine-1-phosphate uridyltransferase family. It in the C-terminal section; belongs to the transferase hexapeptide repeat family. In terms of assembly, homotrimer. Requires Mg(2+) as cofactor.

The protein resides in the cytoplasm. The enzyme catalyses alpha-D-glucosamine 1-phosphate + acetyl-CoA = N-acetyl-alpha-D-glucosamine 1-phosphate + CoA + H(+). The catalysed reaction is N-acetyl-alpha-D-glucosamine 1-phosphate + UTP + H(+) = UDP-N-acetyl-alpha-D-glucosamine + diphosphate. It functions in the pathway nucleotide-sugar biosynthesis; UDP-N-acetyl-alpha-D-glucosamine biosynthesis; N-acetyl-alpha-D-glucosamine 1-phosphate from alpha-D-glucosamine 6-phosphate (route II): step 2/2. It participates in nucleotide-sugar biosynthesis; UDP-N-acetyl-alpha-D-glucosamine biosynthesis; UDP-N-acetyl-alpha-D-glucosamine from N-acetyl-alpha-D-glucosamine 1-phosphate: step 1/1. The protein operates within bacterial outer membrane biogenesis; LPS lipid A biosynthesis. Catalyzes the last two sequential reactions in the de novo biosynthetic pathway for UDP-N-acetylglucosamine (UDP-GlcNAc). The C-terminal domain catalyzes the transfer of acetyl group from acetyl coenzyme A to glucosamine-1-phosphate (GlcN-1-P) to produce N-acetylglucosamine-1-phosphate (GlcNAc-1-P), which is converted into UDP-GlcNAc by the transfer of uridine 5-monophosphate (from uridine 5-triphosphate), a reaction catalyzed by the N-terminal domain. In Bacillus cereus (strain ATCC 14579 / DSM 31 / CCUG 7414 / JCM 2152 / NBRC 15305 / NCIMB 9373 / NCTC 2599 / NRRL B-3711), this protein is Bifunctional protein GlmU.